The chain runs to 179 residues: Large ribosomal subunit protein uL10 (179 aa).

Belongs to the universal ribosomal protein uL10 family. Part of the ribosomal stalk of the 50S ribosomal subunit. The N-terminus interacts with L11 and the large rRNA to form the base of the stalk. The C-terminus forms an elongated spine to which L12 dimers bind in a sequential fashion forming a multimeric L10(L12)X complex.

Its function is as follows. Forms part of the ribosomal stalk, playing a central role in the interaction of the ribosome with GTP-bound translation factors. This Kosmotoga olearia (strain ATCC BAA-1733 / DSM 21960 / TBF 19.5.1) protein is Large ribosomal subunit protein uL10.